The following is a 360-amino-acid chain: Meiosis-inducing protein 1 (360 aa).

The interval 102–135 (SKETKTTKDCTMATGPERGKKSSESTRSSSLSSL) is disordered. Residues 126 to 135 (STRSSSLSSL) show a composition bias toward low complexity.

In terms of assembly, interacts with UME6.

It localises to the nucleus. Functionally, transcription factor required for sporulation and for early sporulation-specific genes expression. Positive regulator of SME1/IME2 expression. Directly activates expression of SLZ1 during meiosis. The polypeptide is Meiosis-inducing protein 1 (IME1) (Saccharomyces cerevisiae (strain ATCC 204508 / S288c) (Baker's yeast)).